A 436-amino-acid chain; its full sequence is Histidinol dehydrogenase (436 aa).

T240, Q262, and H265 together coordinate substrate. Q262 and H265 together coordinate Zn(2+). Catalysis depends on proton acceptor residues E331 and H332. Residues H332, D365, E419, and H424 each coordinate substrate. Position 365 (D365) interacts with Zn(2+). H424 contacts Zn(2+).

This sequence belongs to the histidinol dehydrogenase family. It depends on Zn(2+) as a cofactor.

It carries out the reaction L-histidinol + 2 NAD(+) + H2O = L-histidine + 2 NADH + 3 H(+). The protein operates within amino-acid biosynthesis; L-histidine biosynthesis; L-histidine from 5-phospho-alpha-D-ribose 1-diphosphate: step 9/9. Catalyzes the sequential NAD-dependent oxidations of L-histidinol to L-histidinaldehyde and then to L-histidine. This is Histidinol dehydrogenase from Leifsonia xyli subsp. xyli (strain CTCB07).